We begin with the raw amino-acid sequence, 281 residues long: uncharacterized protein (281 aa).

The N-terminal stretch at 1–23 (MKLYRSLKAALLPGICTSILLAS) is a signal peptide. The N-palmitoyl cysteine moiety is linked to residue Cys-24. Cys-24 carries the S-diacylglycerol cysteine lipid modification. A disordered region spans residues 145 to 165 (HHDHNHMHNHEHEHEEHHDEE). The segment covering 150–161 (HMHNHEHEHEEH) has biased composition (basic and acidic residues).

It is found in the cell membrane. This is an uncharacterized protein from Mycoplasma genitalium (strain ATCC 33530 / DSM 19775 / NCTC 10195 / G37) (Mycoplasmoides genitalium).